The chain runs to 60 residues: Metallothionein A (60 aa).

Positions 1–28 (MDPCQCSKSGTCNCGGSCTCTNCSCKSC) are beta. A divalent metal cation contacts are provided by cysteine 4, cysteine 6, cysteine 12, cysteine 14, cysteine 18, cysteine 20, cysteine 23, cysteine 25, cysteine 28, cysteine 32, cysteine 33, cysteine 35, cysteine 36, cysteine 40, cysteine 43, cysteine 47, cysteine 49, cysteine 54, cysteine 58, and cysteine 59. An alpha region spans residues 29–60 (KKSCCPCCPSGCTKCASGCVCKGKTCDTSCCQ).

Belongs to the metallothionein superfamily. Type 1 family.

Functionally, metallothioneins have a high content of cysteine residues that bind various heavy metals. This Trematomus bernacchii (Emerald rockcod) protein is Metallothionein A (mta).